The primary structure comprises 204 residues: Recombination protein RecR (204 aa).

Residues 63–78 form a C4-type zinc finger; sequence CRRCFNITVGELCAIC. A Toprim domain is found at 86-181; the sequence is TKICVVEEPL…RVTRPARGLP (96 aa).

The protein belongs to the RecR family.

Its function is as follows. May play a role in DNA repair. It seems to be involved in an RecBC-independent recombinational process of DNA repair. It may act with RecF and RecO. In Chloroflexus aurantiacus (strain ATCC 29366 / DSM 635 / J-10-fl), this protein is Recombination protein RecR.